The sequence spans 216 residues: Large ribosomal subunit protein bL25 (216 aa).

Disordered regions lie at residues 1–21 and 192–216; these read MAETQTLKAEAREKGSKGAVR and SADNEAKTEEAGEDKSEEKSSGKED. Over residues 195-216 the composition is skewed to basic and acidic residues; sequence NEAKTEEAGEDKSEEKSSGKED.

Belongs to the bacterial ribosomal protein bL25 family. CTC subfamily. Part of the 50S ribosomal subunit; part of the 5S rRNA/L5/L18/L25 subcomplex. Contacts the 5S rRNA. Binds to the 5S rRNA independently of L5 and L18.

This is one of the proteins that binds to the 5S RNA in the ribosome where it forms part of the central protuberance. This Parvibaculum lavamentivorans (strain DS-1 / DSM 13023 / NCIMB 13966) protein is Large ribosomal subunit protein bL25.